The sequence spans 259 residues: Probable metal transport system ATP-binding protein TC_0339 (259 aa).

In terms of domain architecture, ABC transporter spans Trp9–Leu241. Residue Gly41–Ser48 coordinates ATP.

It belongs to the ABC transporter superfamily.

It is found in the cell inner membrane. Functionally, part of an ATP-driven transport system TC_0338/TC_0339/TC_0341/TC_0342 for a metal. Probably responsible for energy coupling to the transport system. This Chlamydia muridarum (strain MoPn / Nigg) protein is Probable metal transport system ATP-binding protein TC_0339.